Consider the following 185-residue polypeptide: Coordinator of PRMT5 and differentiation stimulator (185 aa).

The residue at position 1 (Met-1) is an N-acetylmethionine. The tract at residues 1 to 109 is disordered; sequence MDPPTAGAQS…MSGCLPKEQA (109 aa). 2 stretches are compositionally biased toward basic and acidic residues: residues 42–52 and 66–77; these read SSQEKATENAT and SPAHGEGTHCEE. At Ser-66 the chain carries Phosphoserine. The span at 78–89 shows a compositional bias: acidic residues; it reads EGFAEDDEDSDG.

As to quaternary structure, interacts with PRMT5. Interacts with histone H4; specifically interacts with the N-terminus of histone H4 but not with histone H3. Interacts with CBFB. Found in a complex with PRMT5, RUNX1 and CBFB.

The protein localises to the nucleus. In terms of biological role, histone-binding protein required for histone H4 methyltransferase activity of PRMT5. Specifically required for histone H4 'Arg-3' methylation mediated by PRMT5, but not histone H3 'Arg-8' methylation, suggesting that it modulates the substrate specificity of PRMT5. Specifically interacts with the N-terminus of histone H4 but not with histone H3, suggesting that it acts by promoting the association between histone H4 and PRMT5. Involved in CCNE1 promoter repression. Plays a role in muscle cell differentiation by modulating the recruitment of PRMT5 to the promoter of genes involved in the coordination between cell cycle exit and muscle differentiation. The sequence is that of Coordinator of PRMT5 and differentiation stimulator (COPRS) from Bos taurus (Bovine).